The sequence spans 434 residues: Cysteine--tRNA ligase (434 aa).

Residue Cys28 participates in Zn(2+) binding. Residues 30–40 (PTVYDDIHIGN) carry the 'HIGH' region motif. 3 residues coordinate Zn(2+): Cys207, His232, and Glu236. Residues 264 to 268 (KMSKS) carry the 'KMSKS' region motif. Position 267 (Lys267) interacts with ATP.

It belongs to the class-I aminoacyl-tRNA synthetase family. As to quaternary structure, monomer. Requires Zn(2+) as cofactor.

It localises to the cytoplasm. It carries out the reaction tRNA(Cys) + L-cysteine + ATP = L-cysteinyl-tRNA(Cys) + AMP + diphosphate. The sequence is that of Cysteine--tRNA ligase from Acholeplasma laidlawii (strain PG-8A).